A 185-amino-acid polypeptide reads, in one-letter code: Calcium-binding protein CML37 (185 aa).

A compositionally biased stretch (polar residues) spans 1 to 12; that stretch reads MTLAKNQKSSLS. The disordered stretch occupies residues 1 to 45; it reads MTLAKNQKSSLSRLYKKVSSKRSESSRNLEDESRTSSNSSGSSSL. Positions 21-34 are enriched in basic and acidic residues; the sequence is KRSESSRNLEDESR. Residues 35-44 show a composition bias toward low complexity; that stretch reads TSSNSSGSSS. EF-hand domains are found at residues 45-80, 81-116, 119-154, and 155-185; these read LNVN…LGGA, LSSR…EDGS, ERRK…LGES, and CTVD…LMMR. The Ca(2+) site is built by Asp-58, Asn-60, Asp-62, Lys-64, Glu-69, Asp-94, Asp-96, Asp-98, and Glu-105. Residues Asp-168, Asn-170, Asp-172, and Glu-179 each contribute to the Ca(2+) site.

As to quaternary structure, binds to ABCG36. Expressed in cotyledons, stipule, young leaves and at the hypocotyl-root junction. In mature root, expressed in the stele, cortex, emerging lateral root, root tip and root cap. In mature plant, expressed at the base of cauline and floral branches, and in rosette and cauline leaves. Expressed from stage 9 to 14 of flower development in anthers. At stage 15, expressed in carpel, sepals, petals and pollen until dehiscence. Expressed in developing seeds and young siliques.

Its function is as follows. Potential calcium sensor that binds calcium in vitro. The chain is Calcium-binding protein CML37 from Arabidopsis thaliana (Mouse-ear cress).